The following is a 567-amino-acid chain: DNA ligase B (567 aa).

Lysine 132 (N6-AMP-lysine intermediate) is an active-site residue.

The protein belongs to the NAD-dependent DNA ligase family. LigB subfamily.

The catalysed reaction is NAD(+) + (deoxyribonucleotide)n-3'-hydroxyl + 5'-phospho-(deoxyribonucleotide)m = (deoxyribonucleotide)n+m + AMP + beta-nicotinamide D-nucleotide.. In terms of biological role, catalyzes the formation of phosphodiester linkages between 5'-phosphoryl and 3'-hydroxyl groups in double-stranded DNA using NAD as a coenzyme and as the energy source for the reaction. The protein is DNA ligase B of Yersinia pseudotuberculosis serotype IB (strain PB1/+).